The sequence spans 222 residues: UPF0688 protein C1orf174 homolog (222 aa).

2 disordered regions span residues 23–57 and 98–158; these read STSL…RTSK and EDGA…EPVP. Over residues 33-48 the composition is skewed to polar residues; the sequence is ASSTSAKTTCLASSSH. Basic and acidic residues predominate over residues 121 to 131; the sequence is VSEEPSVKAEE. S172 carries the phosphoserine modification.

This sequence belongs to the UPF0688 family.

The protein localises to the nucleus. In Rattus norvegicus (Rat), this protein is UPF0688 protein C1orf174 homolog.